The chain runs to 328 residues: Malate dehydrogenase (328 aa).

12 to 18 (GAAGQIG) contacts NAD(+). The substrate site is built by Arg95 and Arg101. NAD(+) contacts are provided by residues Asn108, Gln115, and 132 to 134 (VGN). Positions 134 and 165 each coordinate substrate. His190 acts as the Proton acceptor in catalysis.

The protein belongs to the LDH/MDH superfamily. MDH type 2 family.

It catalyses the reaction (S)-malate + NAD(+) = oxaloacetate + NADH + H(+). Catalyzes the reversible oxidation of malate to oxaloacetate. The sequence is that of Malate dehydrogenase from Methylibium petroleiphilum (strain ATCC BAA-1232 / LMG 22953 / PM1).